The primary structure comprises 172 residues: Small ribosomal subunit protein uS5 (172 aa).

The 64-residue stretch at 17–80 (LKEKMIAINR…EEARRNMTKV (64 aa)) folds into the S5 DRBM domain.

The protein belongs to the universal ribosomal protein uS5 family. In terms of assembly, part of the 30S ribosomal subunit. Contacts proteins S4 and S8.

Its function is as follows. With S4 and S12 plays an important role in translational accuracy. In terms of biological role, located at the back of the 30S subunit body where it stabilizes the conformation of the head with respect to the body. This chain is Small ribosomal subunit protein uS5, found in Polaromonas naphthalenivorans (strain CJ2).